We begin with the raw amino-acid sequence, 146 residues long: D-aminoacyl-tRNA deacylase (146 aa).

The short motif at 137 to 138 is the Gly-cisPro motif, important for rejection of L-amino acids element; it reads GP.

This sequence belongs to the DTD family. As to quaternary structure, homodimer.

The protein localises to the cytoplasm. The enzyme catalyses glycyl-tRNA(Ala) + H2O = tRNA(Ala) + glycine + H(+). It catalyses the reaction a D-aminoacyl-tRNA + H2O = a tRNA + a D-alpha-amino acid + H(+). An aminoacyl-tRNA editing enzyme that deacylates mischarged D-aminoacyl-tRNAs. Also deacylates mischarged glycyl-tRNA(Ala), protecting cells against glycine mischarging by AlaRS. Acts via tRNA-based rather than protein-based catalysis; rejects L-amino acids rather than detecting D-amino acids in the active site. By recycling D-aminoacyl-tRNA to D-amino acids and free tRNA molecules, this enzyme counteracts the toxicity associated with the formation of D-aminoacyl-tRNA entities in vivo and helps enforce protein L-homochirality. This is D-aminoacyl-tRNA deacylase from Bacillus thuringiensis (strain Al Hakam).